The sequence spans 341 residues: Peroxisomal membrane protein import receptor PEX19 (341 aa).

Residues 1-18 show a composition bias toward acidic residues; that stretch reads MNENEYDNFDDLDDLLDE. 5 disordered regions span residues 1 to 26, 39 to 66, 109 to 141, 293 to 312, and 318 to 341; these read MNEN…LDEQ, DSEN…EDPE, VPRQ…FKNI, LGDS…NEEE, and LEID…CKQQ. Positions 39 to 53 are enriched in basic and acidic residues; that stretch reads DSENKEKNAESKDSD. A Phosphoserine modification is found at S61. A compositionally biased stretch (polar residues) spans 113 to 141; it reads QMEQGSSSLKSNSTDKGTLNGSNPGFKNI. A Phosphoserine modification is found at S303. Positions 330–341 are enriched in basic and acidic residues; sequence LDKELTDGCKQQ. The residue at position 338 (C338) is a Cysteine methyl ester. C338 is lipidated: S-farnesyl cysteine. A propeptide spans 339 to 341 (removed in mature form); the sequence is KQQ.

This sequence belongs to the peroxin-19 family. In terms of assembly, interacts (farnesylated) with PEX3; farnesylation is required for this interaction. Interacts with PEX2, PEX5, PEX10, PEX11, PEX12, PEX13, PEX14, PEX17, PEX22, PEX25, PEX30 and PEX32; the interaction requires well-defined PEX19-binding sites within the peroxisomal membrane protein targeting signal (mPTS) of the PMPs and is independent on the presence of PEX3. Interacts with VPS1.

The protein localises to the cytoplasm. Its subcellular location is the peroxisome membrane. It is found in the endoplasmic reticulum membrane. Required for proper post-translational import and stabilization of peroxisomal membrane proteins (PMPs). Acts as a cytosolic import receptor for PMPs and delivers them to the docking factor PEX3 at the peroxisomal membrane for subsequent insertion into the membrane. Acts as a chaperone in stabilizing or maintaining PMPs in the lipid bilayer. Directs PEX17, a peripheral component of the peroxisomal matrix protein translocation machinery, to peroxisomes. Stabilizes VPS1, a protein required for peroxisomal fission, at the peroxisomal membrane. Also acts in conjunction with PEX3 in the formation of peroxisomes from preperoxisomal compartments at the endoplasmic reticulum during de novo peroxisome synthesis, probably via the import of additional PMPs. This is Peroxisomal membrane protein import receptor PEX19 (PEX19) from Saccharomyces cerevisiae (strain YJM789) (Baker's yeast).